Consider the following 512-residue polypeptide: MLTMGTALSQQVNANWQTYIMIAVYFLILIVIGFYGYKQATGNLSEYMLGGRSIGPYITALSAGASDMSGWMIMGLPGSVYGTGLSAMWITIGLTLGAYINYFVVAPRLRVYTELAGDAITLPDFFKNRLNDKNNVLKIISGLIIVVFFTLYTHSGFVSGGKLFESAFGLDYHFGLILVAFIVIFYTFFGGYLAVSITDFFQGVIMLIAMVMVPIVAMMNLNGWGTFHDVAAMKPTNLNLFKGLSFIGTISLFSWGLGYFGQPHIIVRFMSIKSHKMLPKARRLGISWMAVGLLGAVAVGLTGIAFVPAYHIKLEDPETLFIVMSQVLFHPLVGGFLLAAILAAIMSTISSQLLVTSSSLTEDFYKLIRGEEKAKTHQKEFVMIGRLSVLVVAIVAIAIAWNPNDTILNLVGNAWAGFGASFSPLVLFALYWKGLTRAGAVSGMVSGALVVIVWIAWIKPLAHINEIFGLYEIIPGFIVSVIVTYVVSKLTKKPGAFVETDLNKVRDIVREK.

13 helical membrane passes run 16–36, 54–74, 85–105, 139–159, 174–194, 200–220, 240–260, 286–306, 327–347, 381–401, 410–430, 438–458, and 467–487; these read WQTYIMIAVYFLILIVIGFYG, IGPYITALSAGASDMSGWMIM, LSAMWITIGLTLGAYINYFVV, IISGLIIVVFFTLYTHSGFVS, FGLILVAFIVIFYTFFGGYLA, FFQGVIMLIAMVMVPIVAMMN, LFKGLSFIGTISLFSWGLGYF, ISWMAVGLLGAVAVGLTGIAF, VLFHPLVGGFLLAAILAAIMS, FVMIGRLSVLVVAIVAIAIAW, LVGNAWAGFGASFSPLVLFAL, AGAVSGMVSGALVVIVWIAWI, and IFGLYEIIPGFIVSVIVTYVV.

Belongs to the sodium:solute symporter (SSF) (TC 2.A.21) family.

It is found in the cell membrane. It carries out the reaction L-proline(in) + Na(+)(in) = L-proline(out) + Na(+)(out). Functionally, catalyzes the sodium-dependent uptake of extracellular L-proline. Since most S.aureus strains are L-proline auxotrophs, this transporter may aid the bacterial persistence during an infection of tissues with low proline concentrations. The sequence is that of Sodium/proline symporter (putP) from Staphylococcus aureus (strain bovine RF122 / ET3-1).